Reading from the N-terminus, the 417-residue chain is DNA-directed RNA polymerase subunit beta (417 aa).

The protein belongs to the RNA polymerase beta chain family. As to quaternary structure, in plastids the minimal PEP RNA polymerase catalytic core is composed of four subunits: alpha, beta, beta', and beta''. When a (nuclear-encoded) sigma factor is associated with the core the holoenzyme is formed, which can initiate transcription.

The protein resides in the plastid. It is found in the chloroplast. The enzyme catalyses RNA(n) + a ribonucleoside 5'-triphosphate = RNA(n+1) + diphosphate. Functionally, DNA-dependent RNA polymerase catalyzes the transcription of DNA into RNA using the four ribonucleoside triphosphates as substrates. The protein is DNA-directed RNA polymerase subunit beta (rpoB) of Saponaria officinalis (Common soapwort).